Here is a 2752-residue protein sequence, read N- to C-terminus: Protein PFF0380w (2752 aa).

The segment covering Glu20–Arg30 has biased composition (basic and acidic residues). 5 disordered regions span residues Glu20–Asn44, His139–Tyr160, Asn634–Lys678, Asp1048–Asn1130, and Glu1153–Gly1172. The span at Tyr32 to Asn44 shows a compositional bias: low complexity. Residues Lys142–Asn157 show a composition bias toward basic and acidic residues. Residues Asn640–Asn674 show a composition bias toward low complexity. Residues Asp1048 to Thr1060 show a composition bias toward basic and acidic residues. The span at Arg1061 to Asp1075 shows a compositional bias: polar residues. The segment covering Asn1076–Gln1090 has biased composition (basic and acidic residues). The span at Arg1091–Asn1130 shows a compositional bias: polar residues. The segment covering Asn1162–Gly1172 has biased composition (low complexity). An HTH OST-type domain is found at Thr1277–Lys1354. 4 disordered regions span residues Asp1457–Ser1499, Ala1958–Leu1999, Lys2063–Lys2099, and Asp2501–Asn2537. Low complexity-rich tracts occupy residues Asn1469–Ser1499 and Asn1962–Asn1975. The span at Asn1976–Asn1994 shows a compositional bias: acidic residues. 2 stretches are compositionally biased toward low complexity: residues Asn2068–Asn2095 and Asp2501–Asn2526.

The chain is Protein PFF0380w from Plasmodium falciparum (isolate 3D7).